Consider the following 155-residue polypeptide: Endoribonuclease YbeY (155 aa).

Positions 114, 118, and 124 each coordinate Zn(2+).

The protein belongs to the endoribonuclease YbeY family. The cofactor is Zn(2+).

It is found in the cytoplasm. Functionally, single strand-specific metallo-endoribonuclease involved in late-stage 70S ribosome quality control and in maturation of the 3' terminus of the 16S rRNA. The polypeptide is Endoribonuclease YbeY (Cronobacter sakazakii (strain ATCC BAA-894) (Enterobacter sakazakii)).